An 883-amino-acid polypeptide reads, in one-letter code: MPILLFLLDTSASMNQRSHLGTTYLDIAKGAVETFMKLRSRDPASRGDRYMLVTLEELPYGIKAGWKENHATFMNELKNLQAVGLTTLGQSLRTAFDLLNLNRLVTGIDNYGQGRNPFFLEPSIIVAITDGSKLTTANGVQDELHLPLNSPLPGSELTKEPFRWDQRLFALVLRLPGATAVEQEQPTAVQFDESPITAMCDVTGGRSYSVTSQRILNQCLESLVQKIQSGVVINFEKSGPDPPILEDGLTDPVRSVGSQPWHSCHKLIYVRPNPKTGVPIGHWPIPESFWPDQNSPTLPPRTSHPVVKFSCTDSEPLVIDKLPFDKYELEPSPLTQFILERKSPHTCWPVFVPNSAKYCELGHPFGYLKASTALNCVNLFVLPYNYPVLLPLLDDLFKMHKNKPPLKWRQPFENYLKTMPPYYIGPLKKALRMMGTPNLMPDSMEYGLSYSVVSYLKKLSQQAKVESDRVIGSIGKKYPQETSIKVRSGSNALSLALRKDFKQLLQEITGEVPQRPMDLNMKEFAGFQIALLNKDIKPQTFRNAYDIPRTNLLDHLTRMRANLLKSTRQFLKGQDEDQAHSIPIVQMGNYQEYLKHIPSPLRELDYDQPRRLHTFGNPFKLDKKGMMIDEADEFVSGNQNKLKRTGEPNMQGVPKRRRCMSPLLHSRPQSPSVINNHISGKDSPVSVNQVLCDLPKPVAVHKNTDMSNNVAINEATENHVADHLCDDLLITKSESFGTLPNAALEASESYAAGGDSNFSPNDTSDVLLDKTRESGDTESCLLNNNTAFVHRKRRLHQCRSYEEANIELKAQILKEIRKPGRKYGIIFTLLKDVQGDLQTRLLFLQHVIKEATRFKKRMLIEQLEGFLEEIHRRTNQVNHLSSC.

Positions 3–227 (ILLFLLDTSA…QCLESLVQKI (225 aa)) constitute a VWFA domain. An Inhibitory loop motif is present at residues 626-633 (MMIDEADE).

It belongs to the Integrator subunit 6 family. In terms of assembly, component of the Integrator complex, composed of core subunits INTS1, INTS2, INTS3, INTS4, INTS5, INTS6, INTS7, INTS8, INTS9/RC74, INTS10, INTS11/CPSF3L, INTS12, INTS13, INTS14 and INTS15. The core complex associates with protein phosphatase 2A subunits PPP2CA and PPP2R1A, to form the Integrator-PP2A (INTAC) complex.

The protein resides in the nucleus. It is found in the chromosome. Component of the integrator complex, a multiprotein complex that terminates RNA polymerase II (Pol II) transcription in the promoter-proximal region of genes. The integrator complex provides a quality checkpoint during transcription elongation by driving premature transcription termination of transcripts that are unfavorably configured for transcriptional elongation: the complex terminates transcription by (1) catalyzing dephosphorylation of the C-terminal domain (CTD) of Pol II subunit POLR2A/RPB1 and SUPT5H/SPT5, (2) degrading the exiting nascent RNA transcript via endonuclease activity and (3) promoting the release of Pol II from bound DNA. The integrator complex is also involved in terminating the synthesis of non-coding Pol II transcripts, such as enhancer RNAs (eRNAs), small nuclear RNAs (snRNAs), telomerase RNAs and long non-coding RNAs (lncRNAs). Within the integrator complex, INTS6 acts as a molecular adapter that promotes assembly of protein phosphatase 2A (PP2A) subunits to the integrator core complex, promoting recruitment of PP2A to transcription pause-release checkpoint. The sequence is that of Integrator complex subunit 6-B (ints6-b) from Xenopus laevis (African clawed frog).